The sequence spans 314 residues: L-lactate dehydrogenase 1 (314 aa).

NAD(+)-binding positions include Val16, Asp37, Lys42, Tyr68, and 82–83; that span reads GL. Substrate-binding positions include Gln85, Arg91, and 123–126; that span reads NPVD. Residues 121-123 and Ser146 each bind NAD(+); that span reads ATN. Residue 151 to 154 participates in substrate binding; it reads DSAR. 2 residues coordinate beta-D-fructose 1,6-bisphosphate: Arg156 and His171. Residue His178 is the Proton acceptor of the active site. Tyr223 bears the Phosphotyrosine mark. Substrate is bound at residue Thr232.

It belongs to the LDH/MDH superfamily. LDH family. Homotetramer.

Its subcellular location is the cytoplasm. It catalyses the reaction (S)-lactate + NAD(+) = pyruvate + NADH + H(+). It participates in fermentation; pyruvate fermentation to lactate; (S)-lactate from pyruvate: step 1/1. Its activity is regulated as follows. Allosterically activated by fructose 1,6-bisphosphate (FBP). Catalyzes the conversion of lactate to pyruvate. This chain is L-lactate dehydrogenase 1, found in Bacillus anthracis.